A 435-amino-acid polypeptide reads, in one-letter code: Matrix remodeling-associated protein 8 (435 aa).

The first 22 residues, 1–22, serve as a signal peptide directing secretion; the sequence is MEIRCKVLVCHIILLHSATVYL. The Extracellular segment spans residues 23 to 337; the sequence is YSVPASQQNP…QESRLHFFQQ (315 aa). 2 Ig-like V-type domains span residues 32–158 and 156–293; these read PESV…LNIT and NITK…LSVS. Asn41, Asn120, Asn156, Asn245, and Asn324 each carry an N-linked (GlcNAc...) asparagine glycan. A disulfide bridge connects residues Cys54 and Cys138. A disulfide bridge links Cys187 with Cys273. The helical transmembrane segment at 338–358 threads the bilayer; that stretch reads LGYILATLLLFILLLTAVILI. The Cytoplasmic portion of the chain corresponds to 359-435; sequence TRKHQKRGYA…DLELRKEYCK (77 aa).

As to quaternary structure, homodimer in cis. Does not appear to form trans-homodimers.

It localises to the cell membrane. Functionally, transmembrane protein which can modulate activity of various signaling pathways, probably via binding to integrin ITGAV:ITGB3. Mediates heterophilic cell-cell interactions in vitro. The chain is Matrix remodeling-associated protein 8 (mxra8) from Xenopus laevis (African clawed frog).